Consider the following 150-residue polypeptide: Protein E6 (150 aa).

Zinc fingers lie at residues 31 to 67 (CIWC…CAFC) and 104 to 140 (CALC…CTHC).

The protein belongs to the papillomaviridae E6 protein family. Forms homodimers. Interacts with ubiquitin-protein ligase UBE3A/E6-AP; this interaction stimulates UBE3A ubiquitin activity. Interacts with host TP53 and EP300; this interaction inhibits TP53 activity.

It localises to the host cytoplasm. It is found in the host nucleus. Its function is as follows. Plays a major role in the induction and maintenance of cellular transformation. E6 associates with host UBE3A/E6-AP ubiquitin-protein ligase and modulates its activity. Sequesters tumor suppressor TP53 in the host cytoplasm and modulates its activity by interacting with host EP300 that results in the reduction of TP53 acetylation and activation. In turn, apoptosis induced by DNA damage is inhibited. E6 also protects host keratinocytes from apoptosis by mediating the degradation of host BAK1. May also inhibit host immune response. This chain is Protein E6, found in Homo sapiens (Human).